A 364-amino-acid polypeptide reads, in one-letter code: NF-kappa-B inhibitor epsilon (364 aa).

The interval 1 to 108 is disordered; the sequence is MSDARKGPDE…GSPLPPAGVL (108 aa). At Ser18 the chain carries Phosphoserine. Low complexity predominate over residues 36–48; it reads PGSGSSQSGCPQP. Over residues 51 to 70 the composition is skewed to basic and acidic residues; that stretch reads HAPETHKEPEKEDADGERAD. Over residues 93-104 the composition is skewed to pro residues; that stretch reads PSPPAPGSPLPP. ANK repeat units lie at residues 122–155, 157–186, 190–219, 233–262, 267–296, and 300–329; these read DGDT…DIQN, LYQT…SRIL, HGDT…EPGR, QGLA…DIDV, SGKT…RVDA, and NGCT…DSLL.

Belongs to the NF-kappa-B inhibitor family. Interacts with RELA, REL, NFKB1 nuclear factor NF-kappa-B p50 subunit and NFKB2 nuclear factor NF-kappa-B p52 subunit. Interacts with HNRNPA2B1; the interaction may be mediated by the RRM2 domain of HNRNPA2B1, and HNRNPA2B1 may interact simultaneously with FAM76B and either NFKBIA or NFKBIE to form a complex. In terms of processing, serine phosphorylated; followed by proteasome-dependent degradation.

The protein resides in the cytoplasm. In terms of biological role, sequesters NF-kappa-B transcription factor complexes in the cytoplasm, thereby inhibiting their activity. Sequestered complexes include NFKB1/p50-RELA/p65 and NFKB1/p50-REL/c-Rel complexes. Limits B-cell activation in response to pathogens, and also plays an important role in B-cell development. The chain is NF-kappa-B inhibitor epsilon (Nfkbie) from Mus musculus (Mouse).